Here is a 240-residue protein sequence, read N- to C-terminus: Keratinocyte-associated protein 3 (240 aa).

The next 4 helical transmembrane spans lie at 21 to 41 (VGLA…VLHG), 63 to 83 (VISV…LLAS), 94 to 114 (VLLA…LGLL), and 163 to 183 (ALAL…LSGY).

This sequence belongs to the TMEM54 family. Expressed in skin, pancreas and keratinocytes.

It localises to the membrane. This Homo sapiens (Human) protein is Keratinocyte-associated protein 3 (KRTCAP3).